A 71-amino-acid polypeptide reads, in one-letter code: UPF0346 protein SPP_0954 (71 aa).

It belongs to the UPF0346 family.

This Streptococcus pneumoniae (strain P1031) protein is UPF0346 protein SPP_0954.